The primary structure comprises 122 residues: Large ribosomal subunit protein uL14 (122 aa).

This sequence belongs to the universal ribosomal protein uL14 family. Part of the 50S ribosomal subunit. Forms a cluster with proteins L3 and L19. In the 70S ribosome, L14 and L19 interact and together make contacts with the 16S rRNA in bridges B5 and B8.

Its function is as follows. Binds to 23S rRNA. Forms part of two intersubunit bridges in the 70S ribosome. The polypeptide is Large ribosomal subunit protein uL14 (Chromobacterium violaceum (strain ATCC 12472 / DSM 30191 / JCM 1249 / CCUG 213 / NBRC 12614 / NCIMB 9131 / NCTC 9757 / MK)).